We begin with the raw amino-acid sequence, 270 residues long: Oxidoreductase claK (270 aa).

Belongs to the avfA family.

The protein operates within pigment biosynthesis. Its function is as follows. Oxidoreductase; part of the gene cluster that mediates the biosynthesis of the bianthraquinone cladofulvin, a conidial pigment not required for virulence but that plays a role in fitness and resistance to environmental stresses including UV light and low-temperature stress. The pathway begins with the synthesis of atrochrysone thioester by the polyketide synthase (PKS) claG. The atrochrysone carboxyl ACP thioesterase claF then breaks the thioester bond and releases the atrochrysone carboxylic acid from claG. This compound is decarboxylated by claH to yield emodin, which is further converted to chrysophanol hydroquinone by the reductase claC and the dehydratase claB. The cytochrome monooxygenase P450 claM then catalyzes the dimerization of nataloe-emodin to cladofulvin. This chain is Oxidoreductase claK, found in Passalora fulva (Tomato leaf mold).